Consider the following 417-residue polypeptide: Divinyl chlorophyllide a 8-vinyl-reductase, chloroplastic (417 aa).

A chloroplast-targeting transit peptide spans Met-1 to Ser-49.

As to expression, highly expressed in leaves, stems and flower buds. Detected in roots.

It localises to the plastid. The protein localises to the chloroplast. The enzyme catalyses protochlorophyllide a + NADP(+) = 3,8-divinyl protochlorophyllide a + NADPH + H(+). It participates in porphyrin-containing compound metabolism; chlorophyll biosynthesis. Functionally, catalyzes the conversion of divinyl chlorophyllide to monovinyl chlorophyllide. Reduces the 8-vinyl group of the tetrapyrrole to an ethyl group using NADPH as the reductant. The best substrate is (3,8-divinyl)-chlorophyllide a (DV-Chlidea). Very low activity with (3,8-divinyl)-protochlorophyllide a (DV-Pchlidea) and (3,8-divinyl)-magnesium-protoporphyrin IX monomethyl ester (DV-MPE). No activity with (3,8-divinyl)-chlorophyllide b (DV-Chlideb), (3,8-divinyl)-magnesium-protoporphyrin IX (DV-Mg-Proto) and either (3,8-divinyl)-chlorophyll a (DV-Chla) or b (DV-Chlb). The polypeptide is Divinyl chlorophyllide a 8-vinyl-reductase, chloroplastic (DVR) (Arabidopsis thaliana (Mouse-ear cress)).